Reading from the N-terminus, the 141-residue chain is NIDQSFPGFHGSEMWNPNTDLSEDCLYLNVWIPAPKPKNATVLIWIYGGGFQTGTSSLHVYDGKFLARVERVIVVSMNYRVGALGFLALPGNPEAPGNMGLFDQQLALQWVQKNIAAFGGNPKSVTLFGESAGAASVSLHL.

Residue Asn39 is glycosylated (N-linked (GlcNAc...) asparagine). Residue 49 to 50 (GG) coordinates substrate. The Acyl-ester intermediate role is filled by Ser131. A Phosphoserine modification is found at Ser131.

It belongs to the type-B carboxylesterase/lipase family. Homotetramer; disulfide-linked. Dimer of dimers. Present in most cells except erythrocytes.

It localises to the secreted. The enzyme catalyses an acylcholine + H2O = a carboxylate + choline + H(+). Esterase with broad substrate specificity. Contributes to the inactivation of the neurotransmitter acetylcholine. Can degrade neurotoxic organophosphate esters. The chain is Cholinesterase (BCHE) from Macaca mulatta (Rhesus macaque).